Here is a 988-residue protein sequence, read N- to C-terminus: Echinoderm microtubule-associated protein-like 4 (988 aa).

Residue Met-1 is modified to N-acetylmethionine. Positions 1–260 (MDGFAGSLDD…IPSDVDNYDD (260 aa)) are microtubule-binding. Phosphoserine is present on residues Ser-7, Ser-13, Ser-16, Ser-61, and Ser-79. Residues 14–63 (AASTSDVQDRLSALESRVQQQEDEITVLKAALADVLRRLAISEDHVASVK) are a coiled coil. The residue at position 96 (Thr-96) is a Phosphothreonine. Residues 106–194 (TLSSAAKSGT…WENSDDSRNK (89 aa)) are disordered. The segment covering 114–134 (GTEKKKEKPQGQREKKEDSHS) has biased composition (basic and acidic residues). Ser-134 carries the post-translational modification Phosphoserine; by NEK7. Over residues 137–155 (QSPQIRASPSPQPSSQPLQ) the composition is skewed to low complexity. Ser-144 bears the Phosphoserine; by NEK6 mark. Phosphoserine; by NEK7 is present on Ser-146. Residues 156 to 168 (INRQTPESKSSAP) are compositionally biased toward polar residues. A Phosphoserine modification is found at Ser-171. Over residues 176-193 (PTAEKSHNSWENSDDSRN) the composition is skewed to basic and acidic residues. Position 200 is a phosphoserine (Ser-200). The residue at position 201 (Thr-201) is a Phosphothreonine. Position 237 is a phosphotyrosine (Tyr-237). A Phosphothreonine modification is found at Thr-248. 13 WD repeats span residues 270–308 (LKLE…LFNY), 312–359 (TQRH…VWDS), 367–407 (VIGL…VWDW), 414–449 (AEIK…FWTW), 456–495 (RKQG…IWSK), 511–549 (QINR…LWDH), 554–590 (EREI…LRGT), 593–632 (DGFQ…MWNS), 636–673 (RLEW…VLDA), 679–715 (VSIH…LYTV), 722–761 (YSRY…YWDI), 771–829 (RSDC…LFQY), and 836–875 (APSH…QWKL). A Phosphothreonine; by NEK6 and NEK7 modification is found at Thr-620. A disordered region spans residues 887 to 988 (ITDASVTKTP…EEERGITPLC (102 aa)). Over residues 890 to 904 (ASVTKTPASSSETAR) the composition is skewed to polar residues. A phosphoserine mark is found at Ser-906, Ser-908, and Ser-914. The segment covering 927 to 939 (MGSSPTLVENSLE) has biased composition (polar residues). A compositionally biased stretch (acidic residues) spans 944–953 (PSEEQSEWGS).

The protein belongs to the WD repeat EMAP family. Homotrimer; self-association is mediated by the N-terminal coiled coil. Interacts (via WD repeats) with NUDC. Interacts with alpha- and beta-tubulin during mitosis. Phosphorylated during mitosis. Phosphorylation at Ser-144 and Ser-146 promotes its dissociation from microtubules during mitosis which is required for efficient chromosome congression.

It is found in the cytoplasm. The protein resides in the cytoskeleton. Its subcellular location is the spindle. It localises to the microtubule organizing center. The protein localises to the midbody. Functionally, essential for the stability of microtubules (MTs). Essential for the formation of MTs. Required for the organization of the mitotic spindle and for the proper attachment of kinetochores to MTs. Promotes the recruitment of NUDC to the mitotic spindle for mitotic progression. The polypeptide is Echinoderm microtubule-associated protein-like 4 (Eml4) (Mus musculus (Mouse)).